A 291-amino-acid polypeptide reads, in one-letter code: Transmembrane protein 41B (291 aa).

The segment at 1–38 (MAKGRVAERSQMGADHTTPVGDGAAGTRGPAAPGSRDY) is disordered. T18 carries the post-translational modification Phosphothreonine. Low complexity predominate over residues 21–34 (GDGAAGTRGPAAPG). S35 is modified (phosphoserine). 6 helical membrane-spanning segments follow: residues 52-72 (MSLLILVSIFLSAAFVMFLVY), 109-129 (FYVQVLVAYFATYIFLQTFAI), 147-169 (LALFLVCLCSGLGASFCYMLSYL), 197-217 (LINYIIFLRITPFLPNWFINI), 225-245 (PLKVFFIGTFLGVAPPSFVAI), and 262-282 (SWNSIFILMILAVLSILPAIF). Residues 140–251 (GFLYPFPLAL…FVAIKAGTTL (112 aa)) are VTT domain; required for its function in autophagy.

Belongs to the TMEM41 family. Interacts with VMP1. Interacts with COPA, COPB1, VDAC1 and ERLIN2. Interacts with ATG2A. Interacts with SURF4.

Its subcellular location is the endoplasmic reticulum membrane. The protein localises to the endomembrane system. It carries out the reaction a 1,2-diacyl-sn-glycero-3-phospho-L-serine(in) = a 1,2-diacyl-sn-glycero-3-phospho-L-serine(out). The enzyme catalyses cholesterol(in) = cholesterol(out). It catalyses the reaction a 1,2-diacyl-sn-glycero-3-phosphocholine(in) = a 1,2-diacyl-sn-glycero-3-phosphocholine(out). The catalysed reaction is a 1,2-diacyl-sn-glycero-3-phosphoethanolamine(in) = a 1,2-diacyl-sn-glycero-3-phosphoethanolamine(out). Functionally, phospholipid scramblase involved in lipid homeostasis and membrane dynamics processes. Has phospholipid scramblase activity toward cholesterol and phosphatidylserine, as well as phosphatidylethanolamine and phosphatidylcholine. Required for autophagosome formation: participates in early stages of autophagosome biogenesis at the endoplasmic reticulum (ER) membrane by reequilibrating the leaflets of the ER as lipids are extracted by ATG2 (ATG2A or ATG2B) to mediate autophagosome assembly. In addition to autophagy, involved in other processes in which phospholipid scramblase activity is required. Required for normal motor neuron development. The chain is Transmembrane protein 41B from Pongo abelii (Sumatran orangutan).